The sequence spans 371 residues: Cytochrome b (371 aa).

4 helical membrane-spanning segments follow: residues 25–45 (FGSM…FLAI), 69–90 (WMMQ…YIHI), 105–125 (WMSG…GYVL), and 170–190 (FFAL…LHII). The heme b site is built by histidine 75 and histidine 89. Heme b is bound by residues histidine 174 and histidine 188. An a ubiquinone-binding site is contributed by histidine 193. A run of 4 helical transmembrane segments spans residues 218-238 (HKDL…VSFL), 280-300 (LGGA…PFTH), 312-332 (LSQL…WAAT), and 339-358 (FIII…LSTP).

This sequence belongs to the cytochrome b family. The cytochrome bc1 complex contains 3 respiratory subunits (MT-CYB, CYC1 and UQCRFS1), 2 core proteins (UQCRC1 and UQCRC2) and probably 6 low-molecular weight proteins. Heme b serves as cofactor.

It localises to the mitochondrion inner membrane. Its function is as follows. Component of the ubiquinol-cytochrome c reductase complex (complex III or cytochrome b-c1 complex) that is part of the mitochondrial respiratory chain. The b-c1 complex mediates electron transfer from ubiquinol to cytochrome c. Contributes to the generation of a proton gradient across the mitochondrial membrane that is then used for ATP synthesis. This is Cytochrome b (MT-CYB) from Antaresia maculosa (Eastern small blotched python).